A 190-amino-acid polypeptide reads, in one-letter code: Elongation factor P (190 aa).

It belongs to the elongation factor P family.

Its subcellular location is the cytoplasm. It functions in the pathway protein biosynthesis; polypeptide chain elongation. Involved in peptide bond synthesis. Stimulates efficient translation and peptide-bond synthesis on native or reconstituted 70S ribosomes in vitro. Probably functions indirectly by altering the affinity of the ribosome for aminoacyl-tRNA, thus increasing their reactivity as acceptors for peptidyl transferase. This chain is Elongation factor P (efp), found in Mycoplasma genitalium (strain ATCC 33530 / DSM 19775 / NCTC 10195 / G37) (Mycoplasmoides genitalium).